The primary structure comprises 358 residues: Ribosomal RNA large subunit methyltransferase M (358 aa).

S-adenosyl-L-methionine-binding positions include Ser-191, 224-227, Asp-243, Asp-263, and Asp-279; that span reads APGG. Lys-308 (proton acceptor) is an active-site residue.

Belongs to the class I-like SAM-binding methyltransferase superfamily. RNA methyltransferase RlmE family. RlmM subfamily. In terms of assembly, monomer.

The protein localises to the cytoplasm. It catalyses the reaction cytidine(2498) in 23S rRNA + S-adenosyl-L-methionine = 2'-O-methylcytidine(2498) in 23S rRNA + S-adenosyl-L-homocysteine + H(+). Functionally, catalyzes the 2'-O-methylation at nucleotide C2498 in 23S rRNA. In Marinobacter nauticus (strain ATCC 700491 / DSM 11845 / VT8) (Marinobacter aquaeolei), this protein is Ribosomal RNA large subunit methyltransferase M.